A 510-amino-acid chain; its full sequence is D-allose import ATP-binding protein AlsA (510 aa).

2 consecutive ABC transporter domains span residues 6–245 (ISMA…VGRE) and 260–509 (LAHE…ALPQ). 38–45 (GENGAGKS) provides a ligand contact to ATP.

This sequence belongs to the ABC transporter superfamily. D-allose importer (TC 3.A.1.2.6) family. As to quaternary structure, the complex is composed of two ATP-binding proteins (AlsA), two transmembrane proteins (AlsC) and a solute-binding protein (AlsB).

The protein resides in the cell inner membrane. It catalyses the reaction D-allose(out) + ATP + H2O = D-allose(in) + ADP + phosphate + H(+). Part of the ABC transporter complex AlsBAC involved in D-allose import. Probably responsible for energy coupling to the transport system. In Escherichia coli (strain K12), this protein is D-allose import ATP-binding protein AlsA (alsA).